Here is a 306-residue protein sequence, read N- to C-terminus: Immune protein Tsi7 (306 aa).

In terms of assembly, interacts with Tse7.

Immunity protein that plays a role in preventing early activation of toxin Tse7. Protects thereby cells from Tse7 DNase activity. In Pseudomonas aeruginosa (strain ATCC 15692 / DSM 22644 / CIP 104116 / JCM 14847 / LMG 12228 / 1C / PRS 101 / PAO1), this protein is Immune protein Tsi7.